The following is a 90-amino-acid chain: Small ribosomal subunit protein bS18 (90 aa).

Positions 1-14 (MARDNGNKDRDGKR) are enriched in basic and acidic residues. Positions 1 to 23 (MARDNGNKDRDGKRPNGGRNRKM) are disordered.

Belongs to the bacterial ribosomal protein bS18 family. In terms of assembly, part of the 30S ribosomal subunit. Forms a tight heterodimer with protein bS6.

Binds as a heterodimer with protein bS6 to the central domain of the 16S rRNA, where it helps stabilize the platform of the 30S subunit. The polypeptide is Small ribosomal subunit protein bS18 (Clostridium acetobutylicum (strain ATCC 824 / DSM 792 / JCM 1419 / IAM 19013 / LMG 5710 / NBRC 13948 / NRRL B-527 / VKM B-1787 / 2291 / W)).